We begin with the raw amino-acid sequence, 306 residues long: Glutamyl-Q tRNA(Asp) synthetase (306 aa).

L-glutamate is bound by residues 4 to 8 (RYAPS) and E40. The 'HIGH' region signature appears at 7 to 17 (PSPSGDLHFGN). Positions 92, 94, 113, and 117 each coordinate Zn(2+). Residues Y180 and R198 each coordinate L-glutamate. The 'KMSKS' region signature appears at 236 to 240 (RLAKR). K239 contacts ATP.

The protein belongs to the class-I aminoacyl-tRNA synthetase family. GluQ subfamily. Requires Zn(2+) as cofactor.

Functionally, catalyzes the tRNA-independent activation of glutamate in presence of ATP and the subsequent transfer of glutamate onto a tRNA(Asp). Glutamate is transferred on the 2-amino-5-(4,5-dihydroxy-2-cyclopenten-1-yl) moiety of the queuosine in the wobble position of the QUC anticodon. The sequence is that of Glutamyl-Q tRNA(Asp) synthetase from Corynebacterium efficiens (strain DSM 44549 / YS-314 / AJ 12310 / JCM 11189 / NBRC 100395).